Reading from the N-terminus, the 495-residue chain is Cysteine-rich secretory protein LCCL domain-containing 2 (495 aa).

Positions methionine 1–alanine 22 are cleaved as a signal peptide. N-linked (GlcNAc...) asparagine glycosylation occurs at asparagine 27. In terms of domain architecture, SCP spans leucine 60 to tyrosine 200. LCCL domains lie at methionine 282–phenylalanine 377 and threonine 383–asparagine 486. 4 disulfide bridges follow: cysteine 288/cysteine 306, cysteine 310/cysteine 330, cysteine 389/cysteine 411, and cysteine 415/cysteine 438.

In terms of assembly, binds to heparin, dermatan sulfate and chondroitin sulfate. As to expression, present in kidney renal tubules (at protein level).

It is found in the secreted. Functionally, promotes matrix assembly. The chain is Cysteine-rich secretory protein LCCL domain-containing 2 (Crispld2) from Mus musculus (Mouse).